The following is a 152-amino-acid chain: Acidic phospholipase A2 57 (152 aa).

An N-terminal signal peptide occupies residues 1–21 (MYPAHLLGLLAVCVSLLGAAS). Positions 22-27 (IPPLPL) are excised as a propeptide. 7 disulfides stabilise this stretch: Cys-38–Cys-104, Cys-54–Cys-151, Cys-56–Cys-72, Cys-71–Cys-132, Cys-78–Cys-125, Cys-88–Cys-118, and Cys-111–Cys-123. 3 residues coordinate Ca(2+): Tyr-55, Gly-57, and Gly-59. His-75 is an active-site residue. Asp-76 is a binding site for Ca(2+). Asp-126 is a catalytic residue.

Belongs to the phospholipase A2 family. Group I subfamily. D49 sub-subfamily. Ca(2+) is required as a cofactor. In terms of tissue distribution, expressed by the venom gland.

It localises to the secreted. It carries out the reaction a 1,2-diacyl-sn-glycero-3-phosphocholine + H2O = a 1-acyl-sn-glycero-3-phosphocholine + a fatty acid + H(+). In terms of biological role, PLA2 catalyzes the calcium-dependent hydrolysis of the 2-acyl groups in 3-sn-phosphoglycerides. This is Acidic phospholipase A2 57 from Hydrophis hardwickii (Hardwick's spine-bellied seasnake).